The chain runs to 224 residues: UPF0173 metal-dependent hydrolase TK0141 (224 aa).

The protein belongs to the UPF0173 family.

The sequence is that of UPF0173 metal-dependent hydrolase TK0141 from Thermococcus kodakarensis (strain ATCC BAA-918 / JCM 12380 / KOD1) (Pyrococcus kodakaraensis (strain KOD1)).